The following is a 205-amino-acid chain: MAGKKKHLLKVIILGESGVGKTSIMNQYVNRKFSKDYKATIGADFLTKEVLVDDKVVTLQLWDTAGQERFQSLGVAFYRGADCCVLVYDVNNSKSFETLDSWRDEFLIQASPSNPETFPFILLGNKVDVEEQKRMVSKSKALAFCQARGEIPYFETSAKEAINVQEAFETVAKLALENMDSDDIAADFTDPIHLDMESQKTSCYC.

GTP-binding positions include 17 to 23 (SGVGKTS), 33 to 40 (FSKDYKAT), G66, 125 to 128 (NKVD), and 157 to 159 (SAK). The Effector region signature appears at 37 to 45 (YKATIGADF). S-geranylgeranyl cysteine attachment occurs at residues C203 and C205. C205 carries the post-translational modification Cysteine methyl ester.

The protein belongs to the small GTPase superfamily. Rab family.

It is found in the vacuole membrane. Rab activation is generally mediated by a guanine exchange factor (GEF), while inactivation through hydrolysis of bound GTP is catalyzed by a GTPase activating protein (GAP). Ypt/Rab-type GTPases are key regulators of membrane trafficking and intracellular vesicular transport. They act as molecular switches that convert between GTP-bound and GDP-bound states, and regulate virtually all steps of membrane traffic from the formation of the transport vesicle at the donor membrane to its fusion at the target membrane. In the GDP-bound state, Ypt proteins are predominantly cytosolic, solubilized through the interaction with a GDP dissociation inhibitor (GDI). In the GTP-bound state, the proteins are membrane bound and interact with specific effector proteins that select cargo, promote vesicle movement, or verify the correct site of fusion. Ypt7 is necessary for trafficking from the endosome to the vacuole and for homotypic vacuole fusion. Plays an important role in sporulation. In Schizosaccharomyces pombe (strain 972 / ATCC 24843) (Fission yeast), this protein is Ypt/Rab-type GTPase ypt7 (ypt7).